Consider the following 741-residue polypeptide: uncharacterized protein (741 aa).

The first 18 residues, methionine 1 to alanine 18, serve as a signal peptide directing secretion. 3 disordered regions span residues proline 142–aspartate 300, glutamate 423–glycine 528, and glutamate 646–aspartate 681. A compositionally biased stretch (acidic residues) spans glutamate 147–threonine 165. Low complexity-rich tracts occupy residues valine 183 to glutamate 197 and serine 205 to threonine 266. 2 N-linked (GlcNAc...) asparagine glycosylation sites follow: asparagine 232 and asparagine 241. Residues glutamate 423–threonine 432 show a composition bias toward acidic residues. Positions threonine 433–threonine 451 are enriched in low complexity. N-linked (GlcNAc...) asparagine glycosylation is found at asparagine 461 and asparagine 511. Residues proline 500–asparagine 511 show a composition bias toward acidic residues. The span at glutamate 512–glycine 528 shows a compositional bias: low complexity. The segment covering glutamate 646–aspartate 656 has biased composition (polar residues). Residues alanine 657–threonine 671 are compositionally biased toward acidic residues. Residue asparagine 669 is glycosylated (N-linked (GlcNAc...) asparagine). Residue asparagine 719 is the site of GPI-anchor amidated asparagine attachment. A propeptide spans alanine 720–isoleucine 741 (removed in mature form).

It is found in the cell membrane. This is an uncharacterized protein from Candida albicans (strain SC5314 / ATCC MYA-2876) (Yeast).